We begin with the raw amino-acid sequence, 251 residues long: Mlc titration factor A (251 aa).

Positions 111, 148, 152, and 211 each coordinate Zn(2+).

This sequence belongs to the MtfA family. As to quaternary structure, interacts with Mlc. Zn(2+) serves as cofactor.

Its subcellular location is the cytoplasm. In terms of biological role, involved in the modulation of the activity of the glucose-phosphotransferase system (glucose-PTS). Interacts with the transcriptional repressor Mlc, preventing its interaction with DNA and leading to the modulation of expression of genes regulated by Mlc, including ptsG, which encodes the PTS system glucose-specific EIICB component. Its function is as follows. Shows zinc-dependent metallopeptidase activity. This chain is Mlc titration factor A, found in Salmonella arizonae (strain ATCC BAA-731 / CDC346-86 / RSK2980).